A 158-amino-acid polypeptide reads, in one-letter code: NAD(P)H-quinone oxidoreductase subunit N, organellar chromatophore (158 aa).

This sequence belongs to the complex I NdhN subunit family. NDH-1 can be composed of about 15 different subunits; different subcomplexes with different compositions have been identified which probably have different functions.

It is found in the plastid. The protein resides in the organellar chromatophore thylakoid membrane. It carries out the reaction a plastoquinone + NADH + (n+1) H(+)(in) = a plastoquinol + NAD(+) + n H(+)(out). The enzyme catalyses a plastoquinone + NADPH + (n+1) H(+)(in) = a plastoquinol + NADP(+) + n H(+)(out). Functionally, NDH-1 shuttles electrons from an unknown electron donor, via FMN and iron-sulfur (Fe-S) centers, to quinones in the respiratory and/or the photosynthetic chain. The immediate electron acceptor for the enzyme in this species is believed to be plastoquinone. Couples the redox reaction to proton translocation, and thus conserves the redox energy in a proton gradient. In Paulinella chromatophora, this protein is NAD(P)H-quinone oxidoreductase subunit N, organellar chromatophore.